The primary structure comprises 777 residues: Phosphoribosylformylglycinamidine synthase subunit PurL (777 aa).

His-50 is an active-site residue. 2 residues coordinate ATP: Tyr-53 and Lys-92. Glu-94 contacts Mg(2+). Residues 95 to 98 and Arg-117 contribute to the substrate site; that span reads SHNH. The active-site Proton acceptor is His-96. Asp-118 lines the Mg(2+) pocket. Gln-241 is a substrate binding site. Asp-269 contacts Mg(2+). 313-315 lines the substrate pocket; sequence ESQ. The ATP site is built by Asp-520 and Gly-557. Asn-558 is a Mg(2+) binding site. Residue Ser-560 coordinates substrate.

The protein belongs to the FGAMS family. In terms of assembly, monomer. Part of the FGAM synthase complex composed of 1 PurL, 1 PurQ and 2 PurS subunits.

It localises to the cytoplasm. The enzyme catalyses N(2)-formyl-N(1)-(5-phospho-beta-D-ribosyl)glycinamide + L-glutamine + ATP + H2O = 2-formamido-N(1)-(5-O-phospho-beta-D-ribosyl)acetamidine + L-glutamate + ADP + phosphate + H(+). It functions in the pathway purine metabolism; IMP biosynthesis via de novo pathway; 5-amino-1-(5-phospho-D-ribosyl)imidazole from N(2)-formyl-N(1)-(5-phospho-D-ribosyl)glycinamide: step 1/2. Functionally, part of the phosphoribosylformylglycinamidine synthase complex involved in the purines biosynthetic pathway. Catalyzes the ATP-dependent conversion of formylglycinamide ribonucleotide (FGAR) and glutamine to yield formylglycinamidine ribonucleotide (FGAM) and glutamate. The FGAM synthase complex is composed of three subunits. PurQ produces an ammonia molecule by converting glutamine to glutamate. PurL transfers the ammonia molecule to FGAR to form FGAM in an ATP-dependent manner. PurS interacts with PurQ and PurL and is thought to assist in the transfer of the ammonia molecule from PurQ to PurL. This is Phosphoribosylformylglycinamidine synthase subunit PurL from Trichormus variabilis (strain ATCC 29413 / PCC 7937) (Anabaena variabilis).